Reading from the N-terminus, the 546-residue chain is Tryptophan biosynthesis protein TrpCD (546 aa).

The indole-3-glycerol phosphate synthase stretch occupies residues 1-226 (MMDFGFVDSL…FVQTVCGGEK (226 aa)). The segment at 227-546 (MIEDVLRGLD…EEIACKSTSM (320 aa)) is anthranilate phosphoribosyltransferase. Residues glycine 295, 298-299 (GD), serine 303, 305-308 (NVST), 322-330 (KHGNRAVSS), and serine 334 contribute to the 5-phospho-alpha-D-ribose 1-diphosphate site. Position 295 (glycine 295) interacts with anthranilate. Serine 307 lines the Mg(2+) pocket. Asparagine 325 contributes to the anthranilate binding site. Anthranilate is bound at residue arginine 380. Residues aspartate 437 and glutamate 438 each contribute to the Mg(2+) site.

It in the N-terminal section; belongs to the TrpC family. The protein in the C-terminal section; belongs to the anthranilate phosphoribosyltransferase family. It depends on Mg(2+) as a cofactor.

It carries out the reaction 1-(2-carboxyphenylamino)-1-deoxy-D-ribulose 5-phosphate + H(+) = (1S,2R)-1-C-(indol-3-yl)glycerol 3-phosphate + CO2 + H2O. The enzyme catalyses N-(5-phospho-beta-D-ribosyl)anthranilate + diphosphate = 5-phospho-alpha-D-ribose 1-diphosphate + anthranilate. The protein operates within amino-acid biosynthesis; L-tryptophan biosynthesis; L-tryptophan from chorismate: step 2/5. It functions in the pathway amino-acid biosynthesis; L-tryptophan biosynthesis; L-tryptophan from chorismate: step 4/5. Functionally, bifunctional enzyme that catalyzes the second and fourth steps of tryptophan biosynthetic pathway. The second step is catalyzed by the anthranilate phosphoribosyltransferase, coded by the TrpD domain and the fourth step is catalyzed by indole-3-glycerol phosphate synthase, coded by the TrpC domain. In Archaeoglobus fulgidus (strain ATCC 49558 / DSM 4304 / JCM 9628 / NBRC 100126 / VC-16), this protein is Tryptophan biosynthesis protein TrpCD (trpCD).